The chain runs to 382 residues: Proton extrusion protein PxcA (382 aa).

A run of 4 helical transmembrane segments spans residues 162–182 (ILLL…TYIV), 257–277 (AIKN…VCLV), 305–325 (IILF…TVLL), and 340–360 (FILL…KYWI).

The protein belongs to the CemA family.

Its subcellular location is the cell inner membrane. Required for H(+) efflux immediately after light irradiation to form a rapid H(+) concentration gradient across the thylakoid membranes. Together with PxcL, contributes to transient H(+) uptake following dark to light transition. This chain is Proton extrusion protein PxcA, found in Parasynechococcus marenigrum (strain WH8102).